Here is a 361-residue protein sequence, read N- to C-terminus: NudC domain-containing protein 3 (361 aa).

Basic and acidic residues predominate over residues 87-97; the sequence is KIRRKEEEEAK. Disordered regions lie at residues 87–106 and 124–158; these read KIRR…AAEK and LDGH…VAGA. Serine 146 carries the post-translational modification Phosphoserine. A compositionally biased stretch (low complexity) spans 148–158; sequence EAEAPGAVAGA. A CS domain is found at 185–277; sequence AVRENYTWSQ…VGEYWWNAIL (93 aa). Serine 340 and serine 355 each carry phosphoserine.

The polypeptide is NudC domain-containing protein 3 (NUDCD3) (Homo sapiens (Human)).